The following is a 725-amino-acid chain: Methionine--tRNA ligase (725 aa).

Positions 27-37 (PYANGQIHIGH) match the 'HIGH' region motif. Residues C158, C161, C171, and C174 each contribute to the Zn(2+) site. Positions 348–352 (KMSKS) match the 'KMSKS' region motif. Residue K351 participates in ATP binding. Positions 619–725 (DFAKIDLRIA…SGAKPGMRVK (107 aa)) constitute a tRNA-binding domain.

The protein belongs to the class-I aminoacyl-tRNA synthetase family. MetG type 1 subfamily. As to quaternary structure, homodimer. Zn(2+) is required as a cofactor.

The protein resides in the cytoplasm. The enzyme catalyses tRNA(Met) + L-methionine + ATP = L-methionyl-tRNA(Met) + AMP + diphosphate. Is required not only for elongation of protein synthesis but also for the initiation of all mRNA translation through initiator tRNA(fMet) aminoacylation. The sequence is that of Methionine--tRNA ligase from Burkholderia mallei (strain NCTC 10247).